The primary structure comprises 310 residues: NADP-dependent D-sorbitol-6-phosphate dehydrogenase (310 aa).

Catalysis depends on Tyr48, which acts as the Proton donor. His108 provides a ligand contact to substrate. NADP(+) is bound at residue 210–272 (TPLGGAAANK…SSKIQRLKEN (63 aa)).

Belongs to the aldo/keto reductase family.

The catalysed reaction is D-sorbitol 6-phosphate + NADP(+) = aldehydo-D-glucose 6-phosphate + NADPH + H(+). Functionally, synthesizes sorbitol-6-phosphate, a key intermediate in the synthesis of sorbitol which is a major photosynthetic product in many members of the Rosaceae family. The protein is NADP-dependent D-sorbitol-6-phosphate dehydrogenase (S6PDH) of Malus domestica (Apple).